We begin with the raw amino-acid sequence, 205 residues long: Holliday junction branch migration complex subunit RuvA (205 aa).

The domain I stretch occupies residues 1 to 62; the sequence is MFEYVTGYVE…EDIMALYGFK (62 aa). Positions 63–141 are domain II; that stretch reads TREERLLFTK…DVVPDAFVDL (79 aa). The segment at 142–152 is flexible linker; it reads FSDTERFDEKK. Positions 153-205 are domain III; sequence GTSAELDEALEALRALGYAEREVSRVVPELLKESLTTDQYIKKALSLLLNGKR.

The protein belongs to the RuvA family. As to quaternary structure, homotetramer. Forms an RuvA(8)-RuvB(12)-Holliday junction (HJ) complex. HJ DNA is sandwiched between 2 RuvA tetramers; dsDNA enters through RuvA and exits via RuvB. An RuvB hexamer assembles on each DNA strand where it exits the tetramer. Each RuvB hexamer is contacted by two RuvA subunits (via domain III) on 2 adjacent RuvB subunits; this complex drives branch migration. In the full resolvosome a probable DNA-RuvA(4)-RuvB(12)-RuvC(2) complex forms which resolves the HJ.

Its subcellular location is the cytoplasm. Functionally, the RuvA-RuvB-RuvC complex processes Holliday junction (HJ) DNA during genetic recombination and DNA repair, while the RuvA-RuvB complex plays an important role in the rescue of blocked DNA replication forks via replication fork reversal (RFR). RuvA specifically binds to HJ cruciform DNA, conferring on it an open structure. The RuvB hexamer acts as an ATP-dependent pump, pulling dsDNA into and through the RuvAB complex. HJ branch migration allows RuvC to scan DNA until it finds its consensus sequence, where it cleaves and resolves the cruciform DNA. This is Holliday junction branch migration complex subunit RuvA from Bacillus cereus (strain G9842).